We begin with the raw amino-acid sequence, 412 residues long: MNAEIIAVGTELLLGQIANTNAQFLSEKLASIGINVYYHTVVGDNNKRLQKAIELAEERADMLIFTGGLGPTKDDLTKETIASTLDEELVYDEKALTSISDYFKRTGREFTENNKKQALVLNGSTVFANDHGMAPGMGLNTNGKVYILLPGPPKEMKPMYISYVEPFLCKFTTGENIYSRVLRFFGIGESQLEVKVQDLIDGQTNPTIAPLANDGEVTLRLTAKHHDADEAEKLIQHVEDLILERVGEFFYGYDQDFLHYKAIRLLKEKGLTLACAESLTGGLFGNQVTENAGVSSVFKGGVICYQNDVKQQILHVPEEVLRTDGAVSKQCARYLAENVKKLLKADIGISFTGVAGPDASEHKEPGTVFIGLVIKDEPAVVFSLNLSGSRQQIRERSTKYGFYHLFKKLEEI.

It belongs to the CinA family.

This Bacillus mycoides (strain KBAB4) (Bacillus weihenstephanensis) protein is Putative competence-damage inducible protein.